A 378-amino-acid polypeptide reads, in one-letter code: Polygalacturonase (378 aa).

A signal peptide spans 1-20; that stretch reads MILTRSVVLGFLGSASLALA. Cys-39 and Cys-57 are joined by a disulfide. PbH1 repeat units lie at residues 172-203, 204-225, 226-246, 255-276, and 284-306; these read SSGL…DIGD, SDSI…AINS, GTNI…SIGS, VETV…RVKA, and IKGV…TIRQ. Residue Asp-218 is the Proton donor of the active site. Cys-220 and Cys-236 are oxidised to a cystine. His-240 is an active-site residue. Disulfide bonds link Cys-346–Cys-352 and Cys-370–Cys-378.

This sequence belongs to the glycosyl hydrolase 28 family.

Its subcellular location is the secreted. It carries out the reaction (1,4-alpha-D-galacturonosyl)n+m + H2O = (1,4-alpha-D-galacturonosyl)n + (1,4-alpha-D-galacturonosyl)m.. This chain is Polygalacturonase (PEPG1), found in Penicillium expansum (Blue mold rot fungus).